The primary structure comprises 77 residues: Small ribosomal subunit protein uS17 (77 aa).

It belongs to the universal ribosomal protein uS17 family. Part of the 30S ribosomal subunit.

Functionally, one of the primary rRNA binding proteins, it binds specifically to the 5'-end of 16S ribosomal RNA. In Rickettsia rickettsii (strain Sheila Smith), this protein is Small ribosomal subunit protein uS17.